The primary structure comprises 365 residues: Flagellar P-ring protein (365 aa).

A signal peptide spans 1–19 (MIKFLSTFMLLLVTTVVQA).

It belongs to the FlgI family. The basal body constitutes a major portion of the flagellar organelle and consists of four rings (L,P,S, and M) mounted on a central rod.

Its subcellular location is the periplasm. The protein localises to the bacterial flagellum basal body. Its function is as follows. Assembles around the rod to form the L-ring and probably protects the motor/basal body from shearing forces during rotation. The polypeptide is Flagellar P-ring protein (Escherichia fergusonii (strain ATCC 35469 / DSM 13698 / CCUG 18766 / IAM 14443 / JCM 21226 / LMG 7866 / NBRC 102419 / NCTC 12128 / CDC 0568-73)).